The chain runs to 410 residues: D-3-phosphoglycerate dehydrogenase (410 aa).

NAD(+) contacts are provided by residues 161 to 162 (HI), Asp181, 238 to 240 (ASR), and Asp264. Residue Arg240 is part of the active site. Residue Glu269 is part of the active site. The Proton donor role is filled by His292. 292 to 295 (HIGG) serves as a coordination point for NAD(+). An ACT domain is found at 339-410 (RLMHIHENRP…PGTIRARLLY (72 aa)).

Belongs to the D-isomer specific 2-hydroxyacid dehydrogenase family. In terms of assembly, homotetramer.

The catalysed reaction is (2R)-3-phosphoglycerate + NAD(+) = 3-phosphooxypyruvate + NADH + H(+). The enzyme catalyses (R)-2-hydroxyglutarate + NAD(+) = 2-oxoglutarate + NADH + H(+). It functions in the pathway amino-acid biosynthesis; L-serine biosynthesis; L-serine from 3-phospho-D-glycerate: step 1/3. In bacteria displays feedback inhibition by L-serine. Its function is as follows. Catalyzes the reversible oxidation of 3-phospho-D-glycerate to 3-phosphonooxypyruvate, the first step of the phosphorylated L-serine biosynthesis pathway. Also catalyzes the reversible oxidation of 2-hydroxyglutarate to 2-oxoglutarate. This is D-3-phosphoglycerate dehydrogenase (serA) from Escherichia coli O6:H1 (strain CFT073 / ATCC 700928 / UPEC).